We begin with the raw amino-acid sequence, 311 residues long: Malate dehydrogenase (311 aa).

NAD(+) is bound by residues 7–13 (GAAGGIG) and Asp-34. Positions 81 and 87 each coordinate substrate. Residues Asn-94 and 117-119 (ITN) contribute to the NAD(+) site. Positions 119 and 153 each coordinate substrate. His-177 functions as the Proton acceptor in the catalytic mechanism. Met-227 contacts NAD(+).

Belongs to the LDH/MDH superfamily. MDH type 1 family. Homodimer.

The enzyme catalyses (S)-malate + NAD(+) = oxaloacetate + NADH + H(+). In terms of biological role, catalyzes the reversible oxidation of malate to oxaloacetate. The sequence is that of Malate dehydrogenase from Histophilus somni (strain 129Pt) (Haemophilus somnus).